The following is a 302-amino-acid chain: Glycine--tRNA ligase alpha subunit (302 aa).

It belongs to the class-II aminoacyl-tRNA synthetase family. Tetramer of two alpha and two beta subunits.

Its subcellular location is the cytoplasm. The catalysed reaction is tRNA(Gly) + glycine + ATP = glycyl-tRNA(Gly) + AMP + diphosphate. This Haemophilus influenzae (strain PittGG) protein is Glycine--tRNA ligase alpha subunit.